The chain runs to 783 residues: Lon protease (783 aa).

In terms of domain architecture, Lon N-terminal spans 16-210 (LPLLASRGVV…KLLEIIKDEI (195 aa)). Residue 361–368 (GAPGVGKT) coordinates ATP. The Lon proteolytic domain maps to 597 to 778 (KDRVGVATGM…DQVLDLILGG (182 aa)). Active-site residues include S684 and K727.

This sequence belongs to the peptidase S16 family. As to quaternary structure, homohexamer. Organized in a ring with a central cavity.

The protein resides in the cytoplasm. It catalyses the reaction Hydrolysis of proteins in presence of ATP.. Functionally, ATP-dependent serine protease that mediates the selective degradation of mutant and abnormal proteins as well as certain short-lived regulatory proteins. Required for cellular homeostasis and for survival from DNA damage and developmental changes induced by stress. Degrades polypeptides processively to yield small peptide fragments that are 5 to 10 amino acids long. Binds to DNA in a double-stranded, site-specific manner. This is Lon protease from Halothermothrix orenii (strain H 168 / OCM 544 / DSM 9562).